The primary structure comprises 98 residues: Large ribosomal subunit protein bL25 (98 aa).

It belongs to the bacterial ribosomal protein bL25 family. In terms of assembly, part of the 50S ribosomal subunit; part of the 5S rRNA/L5/L18/L25 subcomplex. Contacts the 5S rRNA. Binds to the 5S rRNA independently of L5 and L18.

Its function is as follows. This is one of the proteins that binds to the 5S RNA in the ribosome where it forms part of the central protuberance. This chain is Large ribosomal subunit protein bL25, found in Synechocystis sp. (strain ATCC 27184 / PCC 6803 / Kazusa).